The chain runs to 319 residues: MDVMTLATIPSPPQGVWYLGPIPIRAYAMCIIAGIIVAIWLTRKRYAARGGNPEIVLDAAIVAVPAGIIGGRIYHVITDNQKYFCDTCNPVDAFKITNGGLGIWGAVILGGLAVAVFFRYKKLPLAPFADAVAPAVILAQGIGRLGNWFNQELYGAETTVPWALEIYYRVDENGKFAPVTGTSTGEVMATVHPTFLYELLWNLLIFALLMWADKRFKLGHGRVFALYVAGYTLGRFWIEQMRVDEATLIGGIRINTIVSAVVFAGAIIVFFLLKKGRETPEEVDPTFAASVAADAVASPDGKPLPKAGEGIDGETPSTR.

Transmembrane regions (helical) follow at residues 21 to 41, 50 to 70, and 98 to 118; these read PIPI…AIWL, GGNP…GIIG, and NGGL…AVFF. Residue Arg-144 coordinates a 1,2-diacyl-sn-glycero-3-phospho-(1'-sn-glycerol). A run of 2 helical transmembrane segments spans residues 191-211 and 254-274; these read VHPT…LLMW and INTI…FLLK. The tract at residues 295–319 is disordered; that stretch reads AVASPDGKPLPKAGEGIDGETPSTR.

Belongs to the Lgt family.

It localises to the cell membrane. It carries out the reaction L-cysteinyl-[prolipoprotein] + a 1,2-diacyl-sn-glycero-3-phospho-(1'-sn-glycerol) = an S-1,2-diacyl-sn-glyceryl-L-cysteinyl-[prolipoprotein] + sn-glycerol 1-phosphate + H(+). Its pathway is protein modification; lipoprotein biosynthesis (diacylglyceryl transfer). In terms of biological role, catalyzes the transfer of the diacylglyceryl group from phosphatidylglycerol to the sulfhydryl group of the N-terminal cysteine of a prolipoprotein, the first step in the formation of mature lipoproteins. This chain is Phosphatidylglycerol--prolipoprotein diacylglyceryl transferase, found in Corynebacterium glutamicum (strain R).